We begin with the raw amino-acid sequence, 100 residues long: Small ribosomal subunit protein uS14 (100 aa).

It belongs to the universal ribosomal protein uS14 family. As to quaternary structure, part of the 30S ribosomal subunit. Contacts proteins S3 and S10.

In terms of biological role, binds 16S rRNA, required for the assembly of 30S particles and may also be responsible for determining the conformation of the 16S rRNA at the A site. The protein is Small ribosomal subunit protein uS14 of Prochlorococcus marinus subsp. pastoris (strain CCMP1986 / NIES-2087 / MED4).